A 197-amino-acid polypeptide reads, in one-letter code: CRISPR system CMR subunit Cmr7 1 (197 aa).

Belongs to the CRISPR system Cmr7 family. Possible homodimer. Part of the CMR ribonucleoprotein complex, consisting of crRNA plus Cmr1/Cmr2/Cmr3/Cmr4/Cmr5/Cmr6 at 1:1 and possibly 3 Cmr7 dimers. A Cmr2/Cmr3/Cmr7 subcomplex without crRNA can also be isolated. It does not cleave target RNA.

The protein localises to the cytoplasm. In terms of biological role, CRISPR (clustered regularly interspaced short palindromic repeat) is an adaptive immune system that provides protection against mobile genetic elements (viruses, transposable elements and conjugative plasmids). CRISPR clusters contain spacers, sequences complementary to antecedent mobile elements, and target invading nucleic acids. CRISPR clusters are transcribed and processed into CRISPR RNA (crRNA). The CMR complex degrades RNA complementary to the crRNA (target RNA) within UA dinucleotides, generating 3'-OH and 5'-phosphate ends. Activity is dependent on the 8 nt long 5' tag in the crRNA, an unpaired 3' flag on the target RNA, and is stimulated by ATP. Some cleavage of the guide crRNA can also be observed. The protein is CRISPR system CMR subunit Cmr7 1 (cmr7A) of Saccharolobus solfataricus (strain ATCC 35092 / DSM 1617 / JCM 11322 / P2) (Sulfolobus solfataricus).